Here is a 66-residue protein sequence, read N- to C-terminus: Rho-elapitoxin-Da1b (66 aa).

4 disulfide bridges follow: Cys-3–Cys-24, Cys-17–Cys-42, Cys-46–Cys-58, and Cys-59–Cys-64.

Belongs to the three-finger toxin family. Short-chain subfamily. Aminergic toxin sub-subfamily. In terms of tissue distribution, expressed by the venom gland.

The protein localises to the secreted. Its function is as follows. Non-competitive antagonist of alpha-2 adrenergic receptors (ADRA2) in smooth muscles, and partial antagonist of D3 dopamine receptors (DRD3) (inhibits 25% of methylspiperone binding to this receptor). Also shows a low antagonism on D2 dopamine receptors (DRD2) (short isoform). Shows high affinity to adrenergic receptors (Ki=14 nM (ADRA2A), Ki=73 nM (ADRA2B), and Ki=38 nM (ADRA2C)). Increases heart rate and blood catecholamine concentrations. The chain is Rho-elapitoxin-Da1b from Dendroaspis angusticeps (Eastern green mamba).